We begin with the raw amino-acid sequence, 2310 residues long: Peroxide stress-activated histidine kinase mak2 (2310 aa).

A Protein kinase domain is found at 12–292 (DYAISQLGEF…SATDLCYTIV (281 aa)). The 143-residue stretch at 1450-1592 (RLGPLLTTVI…LLSQQIAISV (143 aa)) folds into the GAF domain. The region spanning 1760–1986 (NMSHELRTPF…TFWFHVQLRN (227 aa)) is the Histidine kinase domain. Phosphohistidine; by autocatalysis is present on His1763. Residues 2180-2303 (YALIAEDNLI…QLVNAVREFV (124 aa)) enclose the Response regulatory domain. Asp2232 carries the post-translational modification 4-aspartylphosphate.

The protein localises to the cytoplasm. It carries out the reaction ATP + protein L-histidine = ADP + protein N-phospho-L-histidine.. Functionally, involved in the control of the SAPK-dependent transcriptional response to peroxide stress. Regulates sty1 activity. The sequence is that of Peroxide stress-activated histidine kinase mak2 (mak2) from Schizosaccharomyces pombe (strain 972 / ATCC 24843) (Fission yeast).